A 638-amino-acid polypeptide reads, in one-letter code: Phosphomethylpyrimidine synthase (638 aa).

Residues Asn236, Met265, Tyr294, His330, 350 to 352 (SRG), 391 to 394 (DGLR), and Glu430 each bind substrate. His434 lines the Zn(2+) pocket. Tyr457 provides a ligand contact to substrate. His498 provides a ligand contact to Zn(2+). [4Fe-4S] cluster-binding residues include Cys578, Cys581, and Cys586.

Belongs to the ThiC family. As to quaternary structure, homodimer. The cofactor is [4Fe-4S] cluster.

The catalysed reaction is 5-amino-1-(5-phospho-beta-D-ribosyl)imidazole + S-adenosyl-L-methionine = 4-amino-2-methyl-5-(phosphooxymethyl)pyrimidine + CO + 5'-deoxyadenosine + formate + L-methionine + 3 H(+). It functions in the pathway cofactor biosynthesis; thiamine diphosphate biosynthesis. Functionally, catalyzes the synthesis of the hydroxymethylpyrimidine phosphate (HMP-P) moiety of thiamine from aminoimidazole ribotide (AIR) in a radical S-adenosyl-L-methionine (SAM)-dependent reaction. This Polaromonas sp. (strain JS666 / ATCC BAA-500) protein is Phosphomethylpyrimidine synthase.